Here is a 380-residue protein sequence, read N- to C-terminus: Beta sliding clamp (380 aa).

It belongs to the beta sliding clamp family. Forms a ring-shaped head-to-tail homodimer around DNA which binds and tethers DNA polymerases and other proteins to the DNA. The DNA replisome complex has a single clamp-loading complex (3 tau and 1 each of delta, delta', psi and chi subunits) which binds 3 Pol III cores (1 core on the leading strand and 2 on the lagging strand) each with a beta sliding clamp dimer. Additional proteins in the replisome are other copies of gamma, psi and chi, Ssb, DNA helicase and RNA primase.

It is found in the cytoplasm. In terms of biological role, confers DNA tethering and processivity to DNA polymerases and other proteins. Acts as a clamp, forming a ring around DNA (a reaction catalyzed by the clamp-loading complex) which diffuses in an ATP-independent manner freely and bidirectionally along dsDNA. Initially characterized for its ability to contact the catalytic subunit of DNA polymerase III (Pol III), a complex, multichain enzyme responsible for most of the replicative synthesis in bacteria; Pol III exhibits 3'-5' exonuclease proofreading activity. The beta chain is required for initiation of replication as well as for processivity of DNA replication. The chain is Beta sliding clamp (dnaN) from Halalkalibacterium halodurans (strain ATCC BAA-125 / DSM 18197 / FERM 7344 / JCM 9153 / C-125) (Bacillus halodurans).